The chain runs to 640 residues: Probable potassium transport system protein Kup 2 (640 aa).

Transmembrane regions (helical) follow at residues 19–39, 67–87, 118–138, 155–175, 181–201, 230–250, 265–285, 307–327, 355–375, 384–404, 415–435, and 437–457; these read LFSS…YGDI, VLSL…VVFV, GVVA…GVIT, EAAK…LFLV, GVIG…IAAL, FVGV…EALY, WLGL…ALLL, MVCL…SGVF, VYIP…VLVF, AYGI…FFVI, AVPL…ANLF, and IFDG…SMIT.

This sequence belongs to the HAK/KUP transporter (TC 2.A.72) family.

It localises to the cell inner membrane. It carries out the reaction K(+)(in) + H(+)(in) = K(+)(out) + H(+)(out). Functionally, transport of potassium into the cell. Likely operates as a K(+):H(+) symporter. This chain is Probable potassium transport system protein Kup 2, found in Syntrophobacter fumaroxidans (strain DSM 10017 / MPOB).